The following is a 1130-amino-acid chain: Putative beta-hexosaminidase (1130 aa).

Residues Met-1 to Ser-23 form the signal peptide. Low complexity-rich tracts occupy residues Pro-1001–Gln-1030 and Leu-1037–Gly-1072. Disordered regions lie at residues Pro-1001–Pro-1075 and Gln-1102–Gly-1130.

The protein belongs to the glycosyl hydrolase 20 family. Prismatic layer of shell (at protein level). Expressed primarily in the mantle with highest level in the mantle edge and lower level in the mantle pallium.

Its subcellular location is the secreted. It catalyses the reaction Hydrolysis of terminal non-reducing N-acetyl-D-hexosamine residues in N-acetyl-beta-D-hexosaminides.. The protein operates within glycan degradation; chitin degradation. The protein is Putative beta-hexosaminidase of Pinctada maxima (Silver-lipped pearl oyster).